The following is a 185-amino-acid chain: Transmembrane protein 140 (185 aa).

Over 1 to 11 (MAGPRPRWRDQ) the chain is Cytoplasmic. Residues 12-32 (LLFMSIIVLVIVVICLMFYAL) traverse the membrane as a helical segment. The Extracellular segment spans residues 33 to 77 (LWEAGNLTDLPNLRIGFYNFCLWNEDTSTLQCHQFPELEALGVPR). Asn-38 is a glycosylation site (N-linked (GlcNAc...) asparagine). Residues 78–98 (VGLGLARLGVYGSLVLTLFAP) form a helical membrane-spanning segment. Residues 99 to 114 (QPLLLAQCNSDERAWR) lie on the Cytoplasmic side of the membrane. A helical transmembrane segment spans residues 115–135 (LAVGFLAVSSVLLAGGLGLFL). Residues 136–150 (SYVWKWVRLSLPGPG) are Extracellular-facing. The helical transmembrane segment at 151–171 (FLALGSAQALLILLLIAMAVF) threads the bilayer. Topologically, residues 172 to 185 (PLRAERAESKLESC) are cytoplasmic.

Expression significantly higher in gliomas than in normal brain tissues.

It localises to the membrane. This is Transmembrane protein 140 (TMEM140) from Homo sapiens (Human).